Consider the following 139-residue polypeptide: Putative general secretion pathway protein B (139 aa).

A helical membrane pass occupies residues 28–48; it reads IIYVICLLLICLWFAGMVLVG. The disordered stretch occupies residues 93–139; the sequence is VEEEDDPGVAVENAPSSSEDEENTVEESEEKAGLRERVKNALNELER. Over residues 110–121 the composition is skewed to acidic residues; sequence SEDEENTVEESE. Residues 122-139 show a composition bias toward basic and acidic residues; sequence EKAGLRERVKNALNELER.

It is found in the cell membrane. In terms of biological role, part of a cryptic operon that encodes proteins involved in type II secretion pathway in other organisms, but is not expressed in strain K12 under standard laboratory conditions. May play a regulatory role under conditions of derepressed gsp gene expression. This Escherichia coli (strain K12) protein is Putative general secretion pathway protein B.